Here is a 482-residue protein sequence, read N- to C-terminus: Capsule synthesis positive regulator AcpB (482 aa).

PRD domains lie at 165 to 270 (PFEK…YKDI) and 283 to 395 (EGNL…YTSN).

It belongs to the AtxA/AcpA family.

Functionally, acpB and AcpA regulate cap gene expression and capsule synthesis. The polypeptide is Capsule synthesis positive regulator AcpB (acpB) (Bacillus anthracis).